We begin with the raw amino-acid sequence, 478 residues long: DNA gyrase subunit B (478 aa).

The Toprim domain maps to 319-438 (CELYLVEGDS…GGHVYIAQPP (120 aa)). Mg(2+) is bound by residues Glu-325, Asp-403, and Asp-405.

This sequence belongs to the type II topoisomerase GyrB family. In terms of assembly, heterotetramer, composed of two GyrA and two GyrB chains. In the heterotetramer, GyrA contains the active site tyrosine that forms a transient covalent intermediate with DNA, while GyrB binds cofactors and catalyzes ATP hydrolysis. It depends on Mg(2+) as a cofactor. Mn(2+) is required as a cofactor. The cofactor is Ca(2+).

The protein localises to the cytoplasm. It catalyses the reaction ATP-dependent breakage, passage and rejoining of double-stranded DNA.. In terms of biological role, a type II topoisomerase that negatively supercoils closed circular double-stranded (ds) DNA in an ATP-dependent manner to modulate DNA topology and maintain chromosomes in an underwound state. Negative supercoiling favors strand separation, and DNA replication, transcription, recombination and repair, all of which involve strand separation. Also able to catalyze the interconversion of other topological isomers of dsDNA rings, including catenanes and knotted rings. Type II topoisomerases break and join 2 DNA strands simultaneously in an ATP-dependent manner. In Cytophaga hutchinsonii, this protein is DNA gyrase subunit B (gyrB).